Consider the following 162-residue polypeptide: Caveolin-2 (162 aa).

The Cytoplasmic segment spans residues 1 to 86 (MGLETEKADV…FEISKYVIYK (86 aa)). A Phosphotyrosine; by SRC modification is found at tyrosine 19. Phosphoserine occurs at positions 20 and 23. A Phosphotyrosine; by SRC modification is found at tyrosine 27. The segment at residues 87–107 (FLTVFLAIPLAFVAGILFATL) is an intramembrane region (helical). Residues 108-162 (SCLHIWIIMPFVKTCLMLLPSVQTIWKSVTDVVIAPLCTSAGRSFSSVSLQLSHD) are Cytoplasmic-facing.

This sequence belongs to the caveolin family. In terms of assembly, monomer or homodimer. Interacts with CAV1; the interaction forms a stable heterooligomeric complex that is required for targeting to lipid rafts and for caveolae formation. Tyrosine phosphorylated forms do not form heterooligomers with the Tyr-19-phosphorylated form existing as a monomer or dimer, and the Tyr-27-form as a monomer only. Interacts (tyrosine phosphorylated form) with the SH2 domain-containing proteins, RASA1, NCK1 and SRC. Interacts (tyrosine phosphorylated form) with INSR, the interaction (Tyr-27-phosphorylated form) is increased on insulin stimulation. Interacts (Tyr-19 phosphorylated form) with MAPK1 (phosphorylated form); the interaction, promoted by insulin, leads to nuclear location and MAPK1 activation. Interacts with STAT3; the interaction is increased on insulin-induced tyrosine phosphorylation leading to STAT activation. In terms of processing, phosphorylated on serine and tyrosine residues. CAV1 promotes phosphorylation on Ser-23 which then targets the complex to the plasma membrane, lipid rafts and caveolae. Phosphorylation on both Tyr-19 and Tyr-27 is required for insulin-induced 'Ser-727' phosphorylation of STAT3 and its activation. Phosphorylation on Tyr-19 is required for insulin-induced phosphorylation of MAPK1 and DNA binding of STAT3. Tyrosine phosphorylation is induced by both EGF and insulin.

Its subcellular location is the nucleus. The protein localises to the cytoplasm. It localises to the golgi apparatus membrane. The protein resides in the cell membrane. It is found in the membrane. Its subcellular location is the caveola. In terms of biological role, may act as a scaffolding protein within caveolar membranes. Interacts directly with G-protein alpha subunits and can functionally regulate their activity. Acts as an accessory protein in conjunction with CAV1 in targeting to lipid rafts and driving caveolae formation. Positive regulator of cellular mitogenesis of the MAPK signaling pathway. Required for the insulin-stimulated nuclear translocation and activation of MAPK1 and STAT3, and the subsequent regulation of cell cycle progression. The polypeptide is Caveolin-2 (CAV2) (Equus caballus (Horse)).